The following is a 677-amino-acid chain: Methionine--tRNA ligase (677 aa).

Positions 15-25 (PYANGSIHLGH) match the 'HIGH' region motif. Residues cysteine 146, cysteine 149, cysteine 159, and cysteine 162 each coordinate Zn(2+). The 'KMSKS' region signature appears at 333-337 (KMSKS). Lysine 336 provides a ligand contact to ATP. The region spanning 576–677 (DFAKIDLRVA…EGAKPGMRVK (102 aa)) is the tRNA-binding domain.

Belongs to the class-I aminoacyl-tRNA synthetase family. MetG type 1 subfamily. Homodimer. Requires Zn(2+) as cofactor.

It localises to the cytoplasm. It carries out the reaction tRNA(Met) + L-methionine + ATP = L-methionyl-tRNA(Met) + AMP + diphosphate. Functionally, is required not only for elongation of protein synthesis but also for the initiation of all mRNA translation through initiator tRNA(fMet) aminoacylation. The chain is Methionine--tRNA ligase from Aeromonas hydrophila subsp. hydrophila (strain ATCC 7966 / DSM 30187 / BCRC 13018 / CCUG 14551 / JCM 1027 / KCTC 2358 / NCIMB 9240 / NCTC 8049).